A 688-amino-acid chain; its full sequence is PTS system glucoside-specific EIICBA component (688 aa).

Residues 3–427 form the PTS EIIC type-1 domain; the sequence is KKLFGQLQRI…FKLKTPGRED (425 aa). Helical transmembrane passes span 12–32, 81–101, 137–157, 182–202, 223–243, 284–304, 315–335, 340–360, 364–384, and 395–415; these read IGKALMLPVAILPAAGILLAF, LGLAGGDGVAALAALVGYLIM, LVLGIPTLQTGVFGGIIMGAL, FVPIVTSVVAIATGVLLSFAW, LTTFIFGIIERSLIPFGLHHI, AFTTGKYPFMMFGLPAAAFAI, VVGGLMLSAGLTAFLTGITEP, FLFVAPVLYGIHVLLAGTSFL, LLGVKIGMTFSGGFIDYILYG, and LVIPVGIVYAIVYYFLFDFAI. Residues 438–519 enclose the PTS EIIB type-1 domain; sequence AKLPFDVLDA…AKIMSGEITK (82 aa). The active-site Phosphocysteine intermediate; for EIIB activity is the cysteine 460. The 105-residue stretch at 560 to 664 folds into the PTS EIIA type-1 domain; sequence DQVFAGKMMG…SIVTPMIITN (105 aa). Catalysis depends on histidine 612, which acts as the Tele-phosphohistidine intermediate; for EIIA activity.

It localises to the cell membrane. Its function is as follows. The phosphoenolpyruvate-dependent sugar phosphotransferase system (sugar PTS), a major carbohydrate active -transport system, catalyzes the phosphorylation of incoming sugar substrates concomitantly with their translocation across the cell membrane. This system is involved in alpha- and beta-glucoside transport. The polypeptide is PTS system glucoside-specific EIICBA component (glcB) (Staphylococcus aureus (strain USA300)).